The sequence spans 185 residues: MVSSWRVQQAAREIRAGAVIAYPTEAVWGLGCDPWNEEAVDRLLAIKSRSVDKGLILIADNIHQFDFLFEDFPDTWIDRMSSTWPGPNTWLVPHQNLLPEWVTGVHDTVALRVSDHPLVRELCSLVGPLISTSANPQGRPAARTRLRIEQYFRGQLDLVLSGSLGGRKNPSLIRDLATGKVVRPS.

The 182-residue stretch at 4–185 (SWRVQQAARE…LATGKVVRPS (182 aa)) folds into the YrdC-like domain.

It belongs to the SUA5 family. TsaC subfamily.

It localises to the cytoplasm. The catalysed reaction is L-threonine + hydrogencarbonate + ATP = L-threonylcarbamoyladenylate + diphosphate + H2O. Required for the formation of a threonylcarbamoyl group on adenosine at position 37 (t(6)A37) in tRNAs that read codons beginning with adenine. Catalyzes the conversion of L-threonine, HCO(3)(-)/CO(2) and ATP to give threonylcarbamoyl-AMP (TC-AMP) as the acyladenylate intermediate, with the release of diphosphate. The polypeptide is Threonylcarbamoyl-AMP synthase (Pseudomonas fluorescens (strain ATCC BAA-477 / NRRL B-23932 / Pf-5)).